A 320-amino-acid polypeptide reads, in one-letter code: ATP-dependent 6-phosphofructokinase (320 aa).

Gly-12 contacts ATP. 22–26 (RAVVR) contacts ADP. Residues 73-74 (RF) and 103-106 (GDGS) contribute to the ATP site. A Mg(2+)-binding site is contributed by Asp-104. Residue 126–128 (TID) participates in substrate binding. The active-site Proton acceptor is Asp-128. Arg-155 is an ADP binding site. Residues Arg-163 and 170–172 (MGR) contribute to the substrate site. ADP is bound by residues 186–188 (GAE) and 214–216 (KNH). Substrate is bound by residues Glu-223, Arg-244, and 250 to 253 (HIQR).

The protein belongs to the phosphofructokinase type A (PFKA) family. ATP-dependent PFK group I subfamily. Prokaryotic clade 'B1' sub-subfamily. In terms of assembly, homotetramer. Requires Mg(2+) as cofactor.

The protein localises to the cytoplasm. It carries out the reaction beta-D-fructose 6-phosphate + ATP = beta-D-fructose 1,6-bisphosphate + ADP + H(+). Its pathway is carbohydrate degradation; glycolysis; D-glyceraldehyde 3-phosphate and glycerone phosphate from D-glucose: step 3/4. Allosterically activated by ADP and other diphosphonucleosides, and allosterically inhibited by phosphoenolpyruvate. Catalyzes the phosphorylation of D-fructose 6-phosphate to fructose 1,6-bisphosphate by ATP, the first committing step of glycolysis. This Teredinibacter turnerae (strain ATCC 39867 / T7901) protein is ATP-dependent 6-phosphofructokinase.